The primary structure comprises 527 residues: Arginine--tRNA ligase (527 aa).

Residues 111–121 (ANPTGPLHIGH) carry the 'HIGH' region motif.

It belongs to the class-I aminoacyl-tRNA synthetase family. In terms of assembly, monomer.

Its subcellular location is the cytoplasm. The enzyme catalyses tRNA(Arg) + L-arginine + ATP = L-arginyl-tRNA(Arg) + AMP + diphosphate. The sequence is that of Arginine--tRNA ligase from Campylobacter concisus (strain 13826).